The primary structure comprises 1155 residues: MIKRVHLGQGKAEEILDLPNLIEIQLNSYEKFLQLERLKTNRPLLNEGLESVFRDVFPMKSSNGEVALEYEKYYIEYNSLSFTEKECKRKGQSYEAVLKIRLNLQFLTTGEIRQKDVYMGTIPLMTDRGTFIVNGAERVIVSQIHRSPGVVFYKEKDLYYARIIPYRGSWLEFEIDSKKDYLYVKIDRKKRILVTLFLRALGLNTRERIIETFYKIRKIEVNEDTKREITGQYLATNIIIKENMTYRAGDKITLQDIEDFLQNGVKEIDLIDFDGYDSVPGKHFISSDVILNCFEKEDAYFSLKDGFKELSRESVMLAVYSVLLPGEPISIDNAESDLRNVFFSEKRYDLGHVGRYKLSKKFGLDDLTTSVLTMTDIVNTISHLLRIYDGHDVLDDIDHLGNRRVRSVGELLTNIYKGAMSRVEKIAKDRMSNKEVFNLKPQELISVKPIVSAVKEFFATSQLSQFMDQVNPLAELTHKRRLNALGPGGLSRDRAGFEVRDVHYTHYGRMCPIETPEGPNIGLIVSLATYAKVNDYGFLETPYRKVVDGKVTDEIEYLSAIDEEKKCIAQANAAVNAEGNYIDDLISVRVSGDYTTMIPKNIDYMDVSPRQLISVSSALIPFLEHNDANRALMGSNMQRQAVPLLFPQPPIVGTGMERIVAKDSGVVVKAKRSGIVVLATSKKIVIRPEDAADDHDLDEYELAKYERTNQDTSFNHSVLVKEGQVVNKGEIIADGPATRYGEVALGNNLLVGFIPWNGFNYEDAILISERIIKEDLYTSIHIKEFSIEVRETKLGPEKVTADIPNVSGKILNKLDENGIVRIGTYVKPGDILIGKVTPKSEGDITPEFKLLTSIFGEKAKDVKNNSLKVPHGTEGTVIDVQRITKDDVSNLPPGVDEILKVYIAKKRKLKEGDKMAGRHGNKGVVAKILPVEDMPYLADGTPLDICLNPLGVPSRMNIGQLMESQLGLAGKYLGEYYDVPVFESATNECIQEKLKKAGFNETSKAVLYDGYTGEPFENEVMVGIIYMLKLHHLVDDKMHARSTGPYSLVSQQPLGGKAQFGGQRLGEMEVWALEAYGAAHTLQELLTVKSDDMSGRVKIYENIVKGIPTNVSGIPESFNVLMQELRGLGFDLSIYDDKGNQIPLTEKEEELINKT.

Belongs to the RNA polymerase beta chain family. As to quaternary structure, the RNAP catalytic core consists of 2 alpha, 1 beta, 1 beta' and 1 omega subunit. When a sigma factor is associated with the core the holoenzyme is formed, which can initiate transcription.

It carries out the reaction RNA(n) + a ribonucleoside 5'-triphosphate = RNA(n+1) + diphosphate. In terms of biological role, DNA-dependent RNA polymerase catalyzes the transcription of DNA into RNA using the four ribonucleoside triphosphates as substrates. In Borrelia hermsii (strain HS1 / DAH), this protein is DNA-directed RNA polymerase subunit beta.